The following is a 100-amino-acid chain: uncharacterized protein (100 aa).

Helical transmembrane passes span 1–21 (MLVL…YKVK) and 54–74 (MILF…VIGA).

It is found in the cell membrane. This is an uncharacterized protein from Bacillus subtilis (strain 168).